Here is a 249-residue protein sequence, read N- to C-terminus: Small ribosomal subunit protein uS3y (249 aa).

Residues Leu21 to Asn92 enclose the KH type-2 domain. Ser212 carries the phosphoserine modification.

This sequence belongs to the universal ribosomal protein uS3 family.

The sequence is that of Small ribosomal subunit protein uS3y (RPS3B) from Arabidopsis thaliana (Mouse-ear cress).